A 540-amino-acid polypeptide reads, in one-letter code: Flavin-dependent halogenase ptaM (540 aa).

The N-terminal stretch at 1–21 (MSVPAQTSVLIVGGGPAGSYA) is a signal peptide. FAD-binding residues include Gly14, Ala17, and Glu47. Residues Asn159, Asn192, Asn204, and Asn243 are each glycosylated (N-linked (GlcNAc...) asparagine). Chloride-binding residues include Ser330 and Gly331. Asn480, Asn491, and Asn523 each carry an N-linked (GlcNAc...) asparagine glycan.

It belongs to the flavin-dependent halogenase family.

The protein operates within secondary metabolite biosynthesis. Functionally, flavin-dependent halogenase; part of the gene cluster that mediates the biosynthesis of pestheic acid, a diphenyl ether which is a biosynthetic precursor of the unique chloropupukeananes. The biosynthesis initiates from condensation of acetate and malonate units catalyzed by the non-reducing PKS ptaA. As the ptaA protein is TE/CLC domain-deficient, hydrolysis and Claisen cyclization of the polyketide could be catalyzed by ptaB containing a beta-lactamase domain. The ptaB protein might hydrolyze the thioester bond between the ACP of ptaA and the intermediate to release atrochrysone carboxylic acid, which is spontaneously dehydrated to form endocrocin anthrone. Endocrocin anthrone is then converted to endocrocin, catalyzed by the anthrone oxygenase ptaC. Spontaneous decarboxylation of endocrocin occurs to generate emodin. An O-methyltransferase (ptaH or ptaI) could methylate emodin to form physcion. PtaJ could then catalyze the oxidative cleavage of physcion, and rotation of the intermediate could then afford desmethylisosulochrin. PtaF, a putative NADH-dependent oxidoreductase, might also participate in the oxidative cleavage step. Desmethylisosulochrin is then transformed by another O-methyltransferase (ptaH or ptaI) to form isosulochrin. Chlorination of isosulochrin by ptaM in the cyclohexadienone B ring then produces chloroisosulochrin. PtaE is responsible for the oxidative coupling reactions of both benzophenones isosulochrin and chloroisosulochrin to RES-1214-1 and pestheic acid respectively, regardless of chlorination. The chain is Flavin-dependent halogenase ptaM from Pestalotiopsis fici (strain W106-1 / CGMCC3.15140).